Here is a 448-residue protein sequence, read N- to C-terminus: tRNA-2-methylthio-N(6)-dimethylallyladenosine synthase (448 aa).

In terms of domain architecture, MTTase N-terminal spans 3–119 (GRVYVKTHGC…LPEMIDRARD (117 aa)). Residues Cys-12, Cys-49, Cys-82, Cys-156, Cys-160, and Cys-163 each coordinate [4Fe-4S] cluster. Residues 142 to 374 (RAEGPTAFVS…QETINANARR (233 aa)) enclose the Radical SAM core domain. The 64-residue stretch at 377 to 440 (ESMVGTVQRV…PNSLRGELLG (64 aa)) folds into the TRAM domain.

The protein belongs to the methylthiotransferase family. MiaB subfamily. As to quaternary structure, monomer. Requires [4Fe-4S] cluster as cofactor.

It is found in the cytoplasm. The enzyme catalyses N(6)-dimethylallyladenosine(37) in tRNA + (sulfur carrier)-SH + AH2 + 2 S-adenosyl-L-methionine = 2-methylsulfanyl-N(6)-dimethylallyladenosine(37) in tRNA + (sulfur carrier)-H + 5'-deoxyadenosine + L-methionine + A + S-adenosyl-L-homocysteine + 2 H(+). Functionally, catalyzes the methylthiolation of N6-(dimethylallyl)adenosine (i(6)A), leading to the formation of 2-methylthio-N6-(dimethylallyl)adenosine (ms(2)i(6)A) at position 37 in tRNAs that read codons beginning with uridine. The protein is tRNA-2-methylthio-N(6)-dimethylallyladenosine synthase of Alkalilimnicola ehrlichii (strain ATCC BAA-1101 / DSM 17681 / MLHE-1).